We begin with the raw amino-acid sequence, 252 residues long: Trans-aconitate 2-methyltransferase (252 aa).

The protein belongs to the methyltransferase superfamily. Tam family.

It localises to the cytoplasm. It carries out the reaction trans-aconitate + S-adenosyl-L-methionine = (E)-3-(methoxycarbonyl)pent-2-enedioate + S-adenosyl-L-homocysteine. Catalyzes the S-adenosylmethionine monomethyl esterification of trans-aconitate. This Escherichia coli O1:K1 / APEC protein is Trans-aconitate 2-methyltransferase.